The primary structure comprises 37 residues: Large ribosomal subunit protein bL36 (37 aa).

It belongs to the bacterial ribosomal protein bL36 family.

The chain is Large ribosomal subunit protein bL36 from Thioalkalivibrio sulfidiphilus (strain HL-EbGR7).